Consider the following 360-residue polypeptide: Phospho-N-acetylmuramoyl-pentapeptide-transferase (360 aa).

Transmembrane regions (helical) follow at residues 16 to 36 (FAVFQYLTLRGILGVLTALVL), 73 to 93 (TMGGALILSSIGVSTLLWADL), 97 to 117 (YVWVVLLVTLLFGAIGWVDDY), 134 to 154 (YFWQSVFGLGAAIFLYMTAST), 168 to 188 (YSIPLGAGFIVLTYFVIVGSS), 199 to 219 (GLAIMPTVMVGGGLGIFCYLS), 236 to 256 (AGELIVFCGALIGAGLGFLWF), 263 to 283 (VFMGDVGALALGAALGTIAVI), 288 to 308 (IVLFIMGGVFVMETLSVVIQV), and 338 to 358 (VIVRFWIITVILVLIGLATLK).

It belongs to the glycosyltransferase 4 family. MraY subfamily. It depends on Mg(2+) as a cofactor.

Its subcellular location is the cell inner membrane. It carries out the reaction UDP-N-acetyl-alpha-D-muramoyl-L-alanyl-gamma-D-glutamyl-meso-2,6-diaminopimeloyl-D-alanyl-D-alanine + di-trans,octa-cis-undecaprenyl phosphate = di-trans,octa-cis-undecaprenyl diphospho-N-acetyl-alpha-D-muramoyl-L-alanyl-D-glutamyl-meso-2,6-diaminopimeloyl-D-alanyl-D-alanine + UMP. The protein operates within cell wall biogenesis; peptidoglycan biosynthesis. In terms of biological role, catalyzes the initial step of the lipid cycle reactions in the biosynthesis of the cell wall peptidoglycan: transfers peptidoglycan precursor phospho-MurNAc-pentapeptide from UDP-MurNAc-pentapeptide onto the lipid carrier undecaprenyl phosphate, yielding undecaprenyl-pyrophosphoryl-MurNAc-pentapeptide, known as lipid I. In Pseudomonas fluorescens (strain Pf0-1), this protein is Phospho-N-acetylmuramoyl-pentapeptide-transferase.